The chain runs to 612 residues: Isocitrate dehydrogenase kinase/phosphatase (612 aa).

ATP contacts are provided by residues 327-333 (APGIKGL) and Lys-348. Asp-383 is a catalytic residue. Positions 593 to 612 (AGRASPEPDAPADARSVRVA) are disordered.

The protein belongs to the AceK family.

The protein localises to the cytoplasm. The enzyme catalyses L-seryl-[isocitrate dehydrogenase] + ATP = O-phospho-L-seryl-[isocitrate dehydrogenase] + ADP + H(+). Bifunctional enzyme which can phosphorylate or dephosphorylate isocitrate dehydrogenase (IDH) on a specific serine residue. This is a regulatory mechanism which enables bacteria to bypass the Krebs cycle via the glyoxylate shunt in response to the source of carbon. When bacteria are grown on glucose, IDH is fully active and unphosphorylated, but when grown on acetate or ethanol, the activity of IDH declines drastically concomitant with its phosphorylation. The polypeptide is Isocitrate dehydrogenase kinase/phosphatase (Paraburkholderia phytofirmans (strain DSM 17436 / LMG 22146 / PsJN) (Burkholderia phytofirmans)).